The chain runs to 254 residues: UPF0246 protein FTH_1656 (254 aa).

This sequence belongs to the UPF0246 family.

In Francisella tularensis subsp. holarctica (strain OSU18), this protein is UPF0246 protein FTH_1656.